Consider the following 100-residue polypeptide: Small ribosomal subunit protein uS14c (100 aa).

It belongs to the universal ribosomal protein uS14 family. Part of the 30S ribosomal subunit.

The protein localises to the plastid. Its subcellular location is the chloroplast. Functionally, binds 16S rRNA, required for the assembly of 30S particles. This Chlorokybus atmophyticus (Soil alga) protein is Small ribosomal subunit protein uS14c.